Consider the following 1372-residue polypeptide: DNA-directed RNA polymerase subunit beta' (1372 aa).

4 residues coordinate Zn(2+): C69, C71, C84, and C87. Positions 460, 462, and 464 each coordinate Mg(2+). 4 residues coordinate Zn(2+): C808, C882, C889, and C892.

This sequence belongs to the RNA polymerase beta' chain family. In terms of assembly, the RNAP catalytic core consists of 2 alpha, 1 beta, 1 beta' and 1 omega subunit. When a sigma factor is associated with the core the holoenzyme is formed, which can initiate transcription. The cofactor is Mg(2+). Requires Zn(2+) as cofactor.

It carries out the reaction RNA(n) + a ribonucleoside 5'-triphosphate = RNA(n+1) + diphosphate. In terms of biological role, DNA-dependent RNA polymerase catalyzes the transcription of DNA into RNA using the four ribonucleoside triphosphates as substrates. The chain is DNA-directed RNA polymerase subunit beta' from Rickettsia felis (strain ATCC VR-1525 / URRWXCal2) (Rickettsia azadi).